A 294-amino-acid polypeptide reads, in one-letter code: Oligopeptide transport system permease protein OppC (294 aa).

Helical transmembrane passes span 27-47 (MISTIFLVAVFLIVYIYSMFL), 94-114 (IAFAVTLITLVVGNILGVITG), 127-147 (FTDFVMILPSMMIIIVFVTII), 151-171 (NSWSLIGIISIFSWIGTTRLI), 202-224 (IWPNLSTLVIAEATLVFAGNIGL), and 260-280 (WTWVPATVVILIVVLAIIFIG). In terms of domain architecture, ABC transmembrane type-1 spans 88-280 (ARNSFNIAFA…IVVLAIIFIG (193 aa)).

Belongs to the binding-protein-dependent transport system permease family. OppBC subfamily. As to quaternary structure, the complex is composed of two ATP-binding proteins (OppD and OppF), two transmembrane proteins (OppB and OppC) and a solute-binding protein (OppA).

It is found in the cell membrane. Functionally, part of the ABC transporter complex OppABCDF involved in the uptake of oligopeptides. Probably responsible for the translocation of the substrate across the membrane. The sequence is that of Oligopeptide transport system permease protein OppC from Lactococcus lactis subsp. cremoris (strain SK11).